The primary structure comprises 205 residues: Probable thymidylate kinase (205 aa).

10–17 (GIDGSGKS) lines the ATP pocket.

Belongs to the thymidylate kinase family.

It carries out the reaction dTMP + ATP = dTDP + ADP. The protein is Probable thymidylate kinase of Methanosarcina barkeri (strain Fusaro / DSM 804).